We begin with the raw amino-acid sequence, 146 residues long: MKLRIATIAGLVVLGSGFAVAQTDVIAQRKAILKQMGEATKPIAAMLKGEAKFDQAVVQKSLAAIADDSKKLPALFPADSKTGGDTAALPKIWEDKAKFDDLFAKLAAAATAAQGTIKDEASLKANIGGVLGNCKSCHDDFRAKKS.

The first 21 residues, 1-21, serve as a signal peptide directing secretion; the sequence is MKLRIATIAGLVVLGSGFAVA. The heme c site is built by Arg29, Thr86, Ala87, Cys134, Cys137, and His138.

As to quaternary structure, monomer. Post-translationally, binds 1 heme c group covalently per subunit.

Functionally, cytochrome c' is the most widely occurring bacterial c-type cytochrome. Cytochromes c' are high-spin proteins and the heme has no sixth ligand. Their exact function is not known. This Rhodopseudomonas palustris (strain ATCC BAA-98 / CGA009) protein is Cytochrome c' (cycA).